We begin with the raw amino-acid sequence, 170 residues long: MORN repeat-containing protein 5 (170 aa).

MORN repeat units follow at residues 8-30 (YFGE…TDTR), 31-53 (YIGE…SGSR), and 54-75 (FDAI…DGLQ).

In terms of tissue distribution, only detected in testis (at protein level).

It localises to the cell projection. Its subcellular location is the cilium. The protein resides in the flagellum. The protein is MORN repeat-containing protein 5 (Morn5) of Mus musculus (Mouse).